A 443-amino-acid polypeptide reads, in one-letter code: MENVDTLILGGTVLCLDETMTRIEDGALAIAGDAIAAVGTEREFRQRFTSRNIVDGKHSLILPGLVNSHTHAAMTCFRGIADDMALMDWLGNYIFPAEARNVDPELVYWGSLLACAEMIKSGTTTFCDMYIFEEETARAAREAGMRCLLGEVLFDFPSPNVKTPQEGLAYTRKLLYRWSGDPLVRIAVEPHALYTCSRSLLLEAGNLATEYQVPLALHLLENSSEKKQLQEKLGQDALSCLRELGLLNERLIAFHCVCLDDEDIETFRDEGCKAVYNPESNMKLASGFAPVSRMLREGICVGLGTDGCASNNNLDLFQEMDTAAKLEKVRHLDPTLMPAETVVRMATCQGARVLGMDGITGCLKAGMKADFILIDLNRPHLTPMYNPYSHLVYTVNGSDVKTVFINGKMVMKDRQLLTFNEEECMQQVRRIAERVRESLKEPV.

Zn(2+) contacts are provided by histidine 69 and histidine 71. Glutamate 98 and histidine 191 together coordinate substrate. Histidine 218 contributes to the Zn(2+) binding site. Positions 221 and 306 each coordinate substrate. Aspartate 306 contributes to the Zn(2+) binding site.

This sequence belongs to the metallo-dependent hydrolases superfamily. MTA/SAH deaminase family. It depends on Zn(2+) as a cofactor.

The catalysed reaction is S-adenosyl-L-homocysteine + H2O + H(+) = S-inosyl-L-homocysteine + NH4(+). It carries out the reaction S-methyl-5'-thioadenosine + H2O + H(+) = S-methyl-5'-thioinosine + NH4(+). Catalyzes the deamination of 5-methylthioadenosine and S-adenosyl-L-homocysteine into 5-methylthioinosine and S-inosyl-L-homocysteine, respectively. Is also able to deaminate adenosine. In Syntrophus aciditrophicus (strain SB), this protein is 5-methylthioadenosine/S-adenosylhomocysteine deaminase 1.